The following is a 394-amino-acid chain: tRNA-specific 2-thiouridylase MnmA (394 aa).

ATP contacts are provided by residues 30 to 37 (AMSGGVDS) and L56. The active-site Nucleophile is the C124. Residues C124 and C220 are joined by a disulfide bond. G148 contacts ATP. The interval 170 to 172 (RDQ) is interaction with tRNA. C220 functions as the Cysteine persulfide intermediate in the catalytic mechanism.

Belongs to the MnmA/TRMU family.

Its subcellular location is the cytoplasm. It catalyses the reaction S-sulfanyl-L-cysteinyl-[protein] + uridine(34) in tRNA + AH2 + ATP = 2-thiouridine(34) in tRNA + L-cysteinyl-[protein] + A + AMP + diphosphate + H(+). Catalyzes the 2-thiolation of uridine at the wobble position (U34) of tRNA, leading to the formation of s(2)U34. This chain is tRNA-specific 2-thiouridylase MnmA, found in Hyphomonas neptunium (strain ATCC 15444).